A 449-amino-acid polypeptide reads, in one-letter code: uncharacterized protein (449 aa).

Disordered regions lie at residues 1–58 (MVKR…SLSS) and 71–125 (EALE…VVEL). Residues 30–46 (KQRDELREKQKRKREDS) are compositionally biased toward basic and acidic residues. Acidic residues predominate over residues 103-124 (SDDDDDDNEEEDDNGFEDQVVE).

The protein belongs to the bystin family.

This is an uncharacterized protein from Caenorhabditis elegans.